The sequence spans 579 residues: Protein PLASTID MOVEMENT IMPAIRED 15 (579 aa).

Coiled coils occupy residues 90–161, 188–216, 383–419, and 481–501; these read EVLK…NEEH, KVLD…IEIE, QKTK…KLES, and LMKT…EERE.

This sequence belongs to the WEB family.

Required for the chloroplast avoidance response under high intensity blue light. This avoidance response consists in the relocation of chloroplasts on the anticlinal side of exposed cells. The chain is Protein PLASTID MOVEMENT IMPAIRED 15 (PMI15) from Arabidopsis thaliana (Mouse-ear cress).